Here is a 161-residue protein sequence, read N- to C-terminus: Transcriptional repressor NrdR (161 aa).

A zinc finger lies at 3 to 34 (CPYCGARDARVIDSRELNGGESIRRRRECIAC). The 91-residue stretch at 49–139 (LMVVKRDGRR…VYRRFADLED (91 aa)) folds into the ATP-cone domain.

This sequence belongs to the NrdR family. It depends on Zn(2+) as a cofactor.

Negatively regulates transcription of bacterial ribonucleotide reductase nrd genes and operons by binding to NrdR-boxes. The polypeptide is Transcriptional repressor NrdR (Thermomicrobium roseum (strain ATCC 27502 / DSM 5159 / P-2)).